The following is a 458-amino-acid chain: 5-hydroxytryptamine receptor 2C (458 aa).

Residues 1 to 32 (MVNLRNAVHSFLVHLIGLLVWQCDISVSPVAA) form the signal peptide. At 33 to 55 (IVTDIFNTSDGGRFKFPDGVQNW) the chain is on the extracellular side. Residues 56–80 (PALSIVVIIIMTIGGNILVIMAVSM) form a helical membrane-spanning segment. Over 81-86 (EKKLHN) the chain is Cytoplasmic. A helical transmembrane segment spans residues 87 to 111 (ATNYFLMSLAIADMLVGLLVMPLSL). Over 112–128 (LAILYDYVWPLPRYLCP) the chain is Extracellular. An intrachain disulfide couples cysteine 127 to cysteine 207. Residues 129-151 (VWISLDVLFSTASIMHLCAISLD) traverse the membrane as a helical segment. Threonine 139 is an ergotamine binding site. A DRY motif; important for ligand-induced conformation changes motif is present at residues 151-153 (DRY). Residues 152–167 (RYVAIRNPIEHSRFNS) are Cytoplasmic-facing. A helical transmembrane segment spans residues 168–189 (RTKAIMKIAIVWAISIGVSVPI). Residues 190–213 (PVIGLRDERKVFVNNTTCVLNDPN) are Extracellular-facing. Leucine 209 is an ergotamine binding site. A helical transmembrane segment spans residues 214–236 (FVLIGSFVAFFIPLTIMVITYCL). The Cytoplasmic segment spans residues 237 to 311 (TIYVLRRQAL…AINNERKASK (75 aa)). The interval 274–301 (EENSANPNQDQNARRRKKKERRPRGTMQ) is disordered. The span at 287 to 297 (RRRKKKERRPR) shows a compositional bias: basic residues. The helical transmembrane segment at 312-336 (VLGIVFFVFLIMWCPFFITNILSVL) threads the bilayer. A disulfide bond links cysteine 337 and cysteine 341. Topologically, residues 337-347 (CEKSCNQKLME) are extracellular. The chain crosses the membrane as a helical span at residues 348 to 370 (KLLNVFVWIGYVCSGINPLVYTL). The NPxxY motif; important for ligand-induced conformation changes and signaling signature appears at 364–368 (NPLVY). The Cytoplasmic portion of the chain corresponds to 371 to 458 (FNKIYRRAFS…SVVSERISSV (88 aa)). A PDZ-binding motif is present at residues 456–458 (SSV).

Belongs to the G-protein coupled receptor 1 family. In terms of assembly, interacts with MPDZ. Interacts with ARRB2. Interacts with MPP3; this interaction stabilizes the receptor at the plasma membrane and prevents the desensitization of the HTR2C receptor-mediated calcium response.

The protein localises to the cell membrane. In terms of biological role, G-protein coupled receptor for 5-hydroxytryptamine (serotonin). Also functions as a receptor for various drugs and psychoactive substances, including ergot alkaloid derivatives, 1-2,5,-dimethoxy-4-iodophenyl-2-aminopropane (DOI) and lysergic acid diethylamide (LSD). Ligand binding causes a conformation change that triggers signaling via guanine nucleotide-binding proteins (G proteins) and modulates the activity of downstream effectors. HTR2C is coupled to G(q)/G(11) G alpha proteins and activates phospholipase C-beta, releasing diacylglycerol (DAG) and inositol 1,4,5-trisphosphate (IP3) second messengers that modulate the activity of phosphatidylinositol 3-kinase and promote the release of Ca(2+) ions from intracellular stores, respectively. Beta-arrestin family members inhibit signaling via G proteins and mediate activation of alternative signaling pathways. Regulates neuronal activity via the activation of short transient receptor potential calcium channels in the brain, and thereby modulates the activation of pro-opiomelanocortin neurons and the release of CRH that then regulates the release of corticosterone. Plays a role in the regulation of appetite and eating behavior, responses to anxiogenic stimuli and stress. Plays a role in insulin sensitivity and glucose homeostasis. The chain is 5-hydroxytryptamine receptor 2C from Pan troglodytes (Chimpanzee).